The chain runs to 542 residues: Chaperonin GroEL 3 (542 aa).

ATP-binding positions include 30 to 33, Lys51, 87 to 91, Gly415, and Asp494; these read TLGP and DGTTT. The segment at 523–542 is disordered; that stretch reads KPKKKEPPMPAMPSDMGDYD.

This sequence belongs to the chaperonin (HSP60) family. In terms of assembly, forms a cylinder of 14 subunits composed of two heptameric rings stacked back-to-back. Interacts with the co-chaperonin GroES.

The protein resides in the cytoplasm. It catalyses the reaction ATP + H2O + a folded polypeptide = ADP + phosphate + an unfolded polypeptide.. Its function is as follows. Together with its co-chaperonin GroES, plays an essential role in assisting protein folding. The GroEL-GroES system forms a nano-cage that allows encapsulation of the non-native substrate proteins and provides a physical environment optimized to promote and accelerate protein folding. The polypeptide is Chaperonin GroEL 3 (Syntrophus aciditrophicus (strain SB)).